The following is a 433-amino-acid chain: Elongation factor 1-alpha (433 aa).

One can recognise a tr-type G domain in the interval 5 to 227 (KPHLNLVVIG…AFDFFKEPPR (223 aa)). Positions 14-21 (GHIDHGKS) are G1. Position 14-21 (14-21 (GHIDHGKS)) interacts with GTP. Ser-21 contacts Mg(2+). Positions 70–74 (GITID) are G2. The interval 91 to 94 (DAPG) is G3. GTP-binding positions include 91-95 (DAPGH) and 153-156 (NKMD). Residues 153–156 (NKMD) are G4. Residues 192 to 194 (SAW) form a G5 region.

Belongs to the TRAFAC class translation factor GTPase superfamily. Classic translation factor GTPase family. EF-Tu/EF-1A subfamily.

The protein localises to the cytoplasm. The enzyme catalyses GTP + H2O = GDP + phosphate + H(+). In terms of biological role, GTP hydrolase that promotes the GTP-dependent binding of aminoacyl-tRNA to the A-site of ribosomes during protein biosynthesis. In Thermofilum pendens (strain DSM 2475 / Hrk 5), this protein is Elongation factor 1-alpha.